A 319-amino-acid polypeptide reads, in one-letter code: Probable deoxyhypusine synthase (319 aa).

The active-site Nucleophile is lysine 287.

It belongs to the deoxyhypusine synthase family. It depends on NAD(+) as a cofactor.

It catalyses the reaction [eIF5A protein]-L-lysine + spermidine = [eIF5A protein]-deoxyhypusine + propane-1,3-diamine. It functions in the pathway protein modification; eIF5A hypusination. Functionally, catalyzes the NAD-dependent oxidative cleavage of spermidine and the subsequent transfer of the butylamine moiety of spermidine to the epsilon-amino group of a specific lysine residue of the eIF-5A precursor protein to form the intermediate deoxyhypusine residue. The polypeptide is Probable deoxyhypusine synthase (Ignicoccus hospitalis (strain KIN4/I / DSM 18386 / JCM 14125)).